A 258-amino-acid polypeptide reads, in one-letter code: Thiazole synthase 2 (258 aa).

The active-site Schiff-base intermediate with DXP is the lysine 97. 1-deoxy-D-xylulose 5-phosphate contacts are provided by residues glycine 158, 184–185 (AG), and 206–207 (NT).

Belongs to the ThiG family. Homotetramer. Forms heterodimers with either ThiH or ThiS.

The protein localises to the cytoplasm. It catalyses the reaction [ThiS sulfur-carrier protein]-C-terminal-Gly-aminoethanethioate + 2-iminoacetate + 1-deoxy-D-xylulose 5-phosphate = [ThiS sulfur-carrier protein]-C-terminal Gly-Gly + 2-[(2R,5Z)-2-carboxy-4-methylthiazol-5(2H)-ylidene]ethyl phosphate + 2 H2O + H(+). It functions in the pathway cofactor biosynthesis; thiamine diphosphate biosynthesis. Its function is as follows. Catalyzes the rearrangement of 1-deoxy-D-xylulose 5-phosphate (DXP) to produce the thiazole phosphate moiety of thiamine. Sulfur is provided by the thiocarboxylate moiety of the carrier protein ThiS. In vitro, sulfur can be provided by H(2)S. This is Thiazole synthase 2 from Syntrophotalea carbinolica (strain DSM 2380 / NBRC 103641 / GraBd1) (Pelobacter carbinolicus).